Here is a 379-residue protein sequence, read N- to C-terminus: Diaminopimelate decarboxylase (379 aa).

Lys-48 is subject to N6-(pyridoxal phosphate)lysine. Residues Gly-214 and 242-245 (EPGR) each bind pyridoxal 5'-phosphate. 3 residues coordinate substrate: Arg-245, Arg-280, and Tyr-284. Cys-309 functions as the Proton donor in the catalytic mechanism. 2 residues coordinate substrate: Glu-310 and Tyr-338. Tyr-338 provides a ligand contact to pyridoxal 5'-phosphate.

This sequence belongs to the Orn/Lys/Arg decarboxylase class-II family. LysA subfamily. In terms of assembly, homodimer. Pyridoxal 5'-phosphate serves as cofactor.

It catalyses the reaction meso-2,6-diaminopimelate + H(+) = L-lysine + CO2. It functions in the pathway amino-acid biosynthesis; L-lysine biosynthesis via DAP pathway; L-lysine from DL-2,6-diaminopimelate: step 1/1. Specifically catalyzes the decarboxylation of meso-diaminopimelate (meso-DAP) to L-lysine. In Deinococcus radiodurans (strain ATCC 13939 / DSM 20539 / JCM 16871 / CCUG 27074 / LMG 4051 / NBRC 15346 / NCIMB 9279 / VKM B-1422 / R1), this protein is Diaminopimelate decarboxylase.